A 1213-amino-acid polypeptide reads, in one-letter code: SWI/SNF complex subunit SMARCC2 (1213 aa).

The interval 1-274 is marR-like, BRCT and chromo domains module; the sequence is MAVRKKDGGP…PVSRRKKISA (274 aa). The MarR-like domain occupies 10–136; the sequence is PNVKYYEAAD…IEKSLVQNNC (127 aa). Positions 140–183 constitute a BRCT; N-terminus domain; sequence PNIFLCPEIEPKLLGKLKDIVKRHQGTISEDKSNASHVVYPVPG. Positions 189 to 217 constitute a Chromo domain; the sequence is EWVRPVMKRDKQVLLHWGYYPDSYDTWIP. The 25-residue stretch at 233–257 folds into the BRCT; C-terminus domain; that stretch reads KPRKVHAKWILDTDTFNEWMNEEDY. The tract at residues 256–413 is disordered; sequence DYEVSDDKSP…GEQTKNPDLH (158 aa). Residues 275 to 284 show a composition bias toward polar residues; sequence KTLTDEVNSP. A phosphoserine mark is found at S283, S286, S302, S304, and S306. K312 is modified (N6-(ADP-ribosyl)lysine). K326 carries the N6-acetyllysine modification. Over residues 331-344 the composition is skewed to basic and acidic residues; sequence HREEEQEDLTKDMD. S347 and S387 each carry phosphoserine. A compositionally biased stretch (acidic residues) spans 379–398; sequence DLDEQDDESMETTGKDEDEN. The SWIRM domain occupies 424–521; the sequence is IIIPSYAAWF…YQVDAESRPT (98 aa). Glycyl lysine isopeptide (Lys-Gly) (interchain with G-Cter in SUMO2) cross-links involve residues K564, K566, K568, and K592. The SANT domain occupies 596-647; that stretch reads SATREWTEQETLLLLEALEMYKDDWNKVSEHVGSRTQDECILHFLRLPIEDP. K704 participates in a covalent cross-link: Glycyl lysine isopeptide (Lys-Gly) (interchain with G-Cter in SUMO2). Positions 724-848 are disordered; it reads KVTGKADPAF…AEPEGERKTK (125 aa). Over residues 747-777 the composition is skewed to basic and acidic residues; it reads EPERIEESGTEEARPEGQAADEKKEPKEPRE. Residue K787 forms a Glycyl lysine isopeptide (Lys-Gly) (interchain with G-Cter in SUMO2) linkage. The segment covering 788-848 has biased composition (basic and acidic residues); that stretch reads EEISEVPKKD…AEPEGERKTK (61 aa). S813 carries the post-translational modification Phosphoserine. Residue K848 forms a Glycyl lysine isopeptide (Lys-Gly) (interchain with G-Cter in SUMO2) linkage. Residues 907–934 are a coiled coil; it reads EELETIMDREREALEYQRQQLLADRQAF. Disordered stretches follow at residues 947-1073 and 1181-1213; these read RQQH…HPGV and LPSA…PPPQ. Low complexity predominate over residues 949 to 962; sequence QHFQQMHQQQQQQP. A compositionally biased stretch (pro residues) spans 963 to 974; the sequence is PTLPPGSQPIPP. Low complexity predominate over residues 975 to 1033; it reads TGAAGPPTVHGLAVPPAAVASAPPGSGAPPGSLGPSEQIGQAGTTAGPQQPQQAGAPQP. 2 stretches are compositionally biased toward pro residues: residues 1034–1060 and 1185–1201; these read GAVP…PPSM and SPLP…PTAP.

The protein belongs to the SMARCC family. Component of the multiprotein chromatin-remodeling complexes SWI/SNF: SWI/SNF-A (BAF), SWI/SNF-B (PBAF) and related complexes. The canonical complex contains a catalytic subunit (either SMARCA4/BRG1/BAF190A or SMARCA2/BRM/BAF190B) and at least SMARCE1, ACTL6A/BAF53, SMARCC1/BAF155, SMARCC2/BAF170, and SMARCB1/SNF5/BAF47. Other subunits specific to each of the complexes may also be present permitting several possible combinations developmentally and tissue specific. Component of the BAF complex, which includes at least actin (ACTB), ARID1A/BAF250A, ARID1B/BAF250B, SMARCA2/BRM, SMARCA4/BRG1, ACTL6A/BAF53, ACTL6B/BAF53B, SMARCE1/BAF57, SMARCC1/BAF155, SMARCC2/BAF170, SMARCB1/SNF5/INI1, and one or more SMARCD1/BAF60A, SMARCD2/BAF60B, or SMARCD3/BAF60C. In muscle cells, the BAF complex also contains DPF3. Component of neural progenitors-specific chromatin remodeling complex (npBAF complex) composed of at least, ARID1A/BAF250A or ARID1B/BAF250B, SMARCD1/BAF60A, SMARCD3/BAF60C, SMARCA2/BRM/BAF190B, SMARCA4/BRG1/BAF190A, SMARCB1/BAF47, SMARCC1/BAF155, SMARCE1/BAF57, SMARCC2/BAF170, PHF10/BAF45A, ACTL6A/BAF53A and actin. Component of neuron-specific chromatin remodeling complex (nBAF complex) composed of at least, ARID1A/BAF250A or ARID1B/BAF250B, SMARCD1/BAF60A, SMARCD3/BAF60C, SMARCA2/BRM/BAF190B, SMARCA4/BRG1/BAF190A, SMARCB1/BAF47, SMARCC1/BAF155, SMARCE1/BAF57, SMARCC2/BAF170, DPF1/BAF45B, DPF3/BAF45C, ACTL6B/BAF53B and actin. Component of the SWI/SNF-B (PBAF) chromatin remodeling complex, at least composed of SMARCA4/BRG1, SMARCB1/BAF47/SNF5, ACTL6A/BAF53A or ACTL6B/BAF53B, SMARCE1/BAF57, SMARCD1/BAF60A, SMARCD2/BAF60B, perhaps SMARCD3/BAF60C, SMARCC1/BAF155, SMARCC2/BAF170, PBRM1/BAF180, ARID2/BAF200 and actin. May also interact with the SIN3A histone deacetylase transcription repressor complex in conjunction with SMARCA2 and SMARCA4. Interacts with SMARD1. Interacts with KDM6B. Interaction with RCOR1. Interacts with DPF2. Interacts with ERCC6. Interacts with FOS. Mono-ADP-ribosylation at Lys-312 by SIRT6 promotes recruitment to the enhancer region of the Heme oxygenase-1 (HO-1) locus, leading to transcription activation of the locus.

It localises to the nucleus. Involved in transcriptional activation and repression of select genes by chromatin remodeling (alteration of DNA-nucleosome topology). Component of SWI/SNF chromatin remodeling complexes that carry out key enzymatic activities, changing chromatin structure by altering DNA-histone contacts within a nucleosome in an ATP-dependent manner. Can stimulate the ATPase activity of the catalytic subunit of these complexes. May be required for CoREST dependent repression of neuronal specific gene promoters in non-neuronal cells. Belongs to the neural progenitors-specific chromatin remodeling complex (npBAF complex) and the neuron-specific chromatin remodeling complex (nBAF complex). During neural development a switch from a stem/progenitor to a postmitotic chromatin remodeling mechanism occurs as neurons exit the cell cycle and become committed to their adult state. The transition from proliferating neural stem/progenitor cells to postmitotic neurons requires a switch in subunit composition of the npBAF and nBAF complexes. As neural progenitors exit mitosis and differentiate into neurons, npBAF complexes which contain ACTL6A/BAF53A and PHF10/BAF45A, are exchanged for homologous alternative ACTL6B/BAF53B and DPF1/BAF45B or DPF3/BAF45C subunits in neuron-specific complexes (nBAF). The npBAF complex is essential for the self-renewal/proliferative capacity of the multipotent neural stem cells. The nBAF complex along with CREST plays a role regulating the activity of genes essential for dendrite growth. Critical regulator of myeloid differentiation, controlling granulocytopoiesis and the expression of genes involved in neutrophil granule formation. This Mus musculus (Mouse) protein is SWI/SNF complex subunit SMARCC2 (Smarcc2).